We begin with the raw amino-acid sequence, 407 residues long: UPF0761 membrane protein AZOSEA40600 (407 aa).

Transmembrane regions (helical) follow at residues 29-49 (SLAFTTLLAIVPLLTVIIALF), 92-112 (GLTLIGTVLLVLTALMLLMTI), 132-152 (LMVHWFALTLGPLALGGSVLA), 174-194 (FARLVPTVLLGSLFSVLYYAV), 207-227 (GGIAAAIVFVLMQRLFGLFIV), and 239-259 (FAVLPIFLVWLYLSWVVILLG).

This sequence belongs to the UPF0761 family.

The protein localises to the cell inner membrane. The sequence is that of UPF0761 membrane protein AZOSEA40600 from Aromatoleum aromaticum (strain DSM 19018 / LMG 30748 / EbN1) (Azoarcus sp. (strain EbN1)).